The following is a 571-amino-acid chain: Urease subunit alpha (571 aa).

The 438-residue stretch at 134 to 571 folds into the Urease domain; it reads GAIDTHIHFI…LPMAQRYFLF (438 aa). His139, His141, and Lys222 together coordinate Ni(2+). N6-carboxylysine is present on Lys222. His224 is a binding site for substrate. Residues His251 and His277 each contribute to the Ni(2+) site. The active-site Proton donor is His325. Asp365 lines the Ni(2+) pocket.

It belongs to the metallo-dependent hydrolases superfamily. Urease alpha subunit family. Heterotrimer of UreA (gamma), UreB (beta) and UreC (alpha) subunits. Three heterotrimers associate to form the active enzyme. Ni cation is required as a cofactor. In terms of processing, carboxylation allows a single lysine to coordinate two nickel ions.

The protein resides in the cytoplasm. It carries out the reaction urea + 2 H2O + H(+) = hydrogencarbonate + 2 NH4(+). It functions in the pathway nitrogen metabolism; urea degradation; CO(2) and NH(3) from urea (urease route): step 1/1. This is Urease subunit alpha from Bordetella bronchiseptica (strain ATCC BAA-588 / NCTC 13252 / RB50) (Alcaligenes bronchisepticus).